The chain runs to 271 residues: Ribosomal RNA small subunit methyltransferase A (271 aa).

S-adenosyl-L-methionine-binding residues include His11, Leu13, Gly38, Glu58, Asp86, and Asn101.

It belongs to the class I-like SAM-binding methyltransferase superfamily. rRNA adenine N(6)-methyltransferase family. RsmA subfamily.

The protein resides in the cytoplasm. The catalysed reaction is adenosine(1518)/adenosine(1519) in 16S rRNA + 4 S-adenosyl-L-methionine = N(6)-dimethyladenosine(1518)/N(6)-dimethyladenosine(1519) in 16S rRNA + 4 S-adenosyl-L-homocysteine + 4 H(+). In terms of biological role, specifically dimethylates two adjacent adenosines (A1518 and A1519) in the loop of a conserved hairpin near the 3'-end of 16S rRNA in the 30S particle. May play a critical role in biogenesis of 30S subunits. In Helicobacter pylori (strain ATCC 700392 / 26695) (Campylobacter pylori), this protein is Ribosomal RNA small subunit methyltransferase A.